Here is a 205-residue protein sequence, read N- to C-terminus: MANLEIIDQKGKSAGNVDLNEEIFGIEPNESVVFDAIIRQRAGKRQGTSAVKNRSAVRGGGKKPWRQKGTGRARQGSIRAPQWRGGGTVFGPTPRSYKMDMPRKARRLAMKSVLSQKVADKDLIILDQLTLEAPKTKELKAILDNANVSGKVLVVSDDKNVQLSGKNLPKVKVVPVNGLNVVDAVDYQKLVLTQDAIKRIEEVLA.

The interval 45–97 (RQGTSAVKNRSAVRGGGKKPWRQKGTGRARQGSIRAPQWRGGGTVFGPTPRSY) is disordered. Residues 60–71 (GGKKPWRQKGTG) show a composition bias toward basic residues.

Belongs to the universal ribosomal protein uL4 family. As to quaternary structure, part of the 50S ribosomal subunit.

In terms of biological role, one of the primary rRNA binding proteins, this protein initially binds near the 5'-end of the 23S rRNA. It is important during the early stages of 50S assembly. It makes multiple contacts with different domains of the 23S rRNA in the assembled 50S subunit and ribosome. Functionally, forms part of the polypeptide exit tunnel. This chain is Large ribosomal subunit protein uL4, found in Lactobacillus gasseri (strain ATCC 33323 / DSM 20243 / BCRC 14619 / CIP 102991 / JCM 1131 / KCTC 3163 / NCIMB 11718 / NCTC 13722 / AM63).